Consider the following 797-residue polypeptide: Peroxisome proliferator-activated receptor gamma coactivator 1-alpha (797 aa).

Lys-77 is modified (N6-acetyllysine). Residues 101–138 form a disordered region; it reads EDGLPSFDALTDGAVTTDNEASPSSMPDGTPPPQEAEE. A compositionally biased stretch (polar residues) spans 114–127; the sequence is AVTTDNEASPSSMP. The short motif at 142–146 is the LXXLL motif element; the sequence is LKKLL. Residue Lys-144 is modified to N6-acetyllysine. Thr-177 bears the Phosphothreonine; by AMPK mark. Lys-183 bears the N6-acetyllysine mark. Residues 212 to 276 form a disordered region; the sequence is YLTTNDDPPH…NDPKGSPFEN (65 aa). Over residues 218 to 236 the composition is skewed to basic and acidic residues; that stretch reads DPPHTKPTENRNSSRDKCA. A compositionally biased stretch (polar residues) spans 243–259; that stretch reads TQPQSQHAQAKPTTLSL. Residues Lys-253, Lys-270, Lys-277, Lys-320, Lys-346, Lys-412, Lys-441, and Lys-450 each carry the N6-acetyllysine modification. Residues 289 to 376 are disordered; the sequence is GTAGLTPPTT…HEERKTKRPS (88 aa). Residues 292 to 338 form an interaction with PPARG region; sequence GLTPPTTPPHKANQDNPFKASPKLKPSCKTVVPPPTKRARYSECSGT. Positions 349-797 are mediates interaction with RNF34; that stretch reads EQSELYAQLS…LKEAQRSLRR (449 aa). Ser-538 carries the phosphoserine; by AMPK modification. Disordered regions lie at residues 543–598, 612–634, and 648–668; these read NSPC…SSRS, HRNS…PRYD, and EYRK…ERQK. A compositionally biased stretch (basic residues) spans 562–577; sequence QRMRSRSRSFSRHRSC. The span at 578–598 shows a compositional bias: low complexity; that stretch reads SRSPYSRSRSRSPGSRSSSRS. The segment covering 621–630 has biased composition (basic residues); sequence SRSRSPYSRR. The 77-residue stretch at 676–752 folds into the RRM domain; that stretch reads RVIYVGKIRP…TDFELYFCGR (77 aa). N6-acetyllysine is present on residues Lys-757 and Lys-778.

Homooligomer. Interacts with MYBBP1A; inhibits MYBBP1A transcriptional activation. Interacts with PRDM16, LPIN1 and PML. Interacts (via LXXLL motif) with RORA and RORC (via AF-2 motif); activates RORA and RORC transcriptional activation. Interacts with LRPPRC. Interacts with FOXO1. Interacts with NR5A2. Post-translationally, phosphorylation by AMPK in skeletal muscle increases activation of its own promoter. Phosphorylated by CLK2. In terms of processing, heavily acetylated by KAT2A/GCN5 under conditions of high nutrients, leading to inactivation of PPARGC1A. Deacetylated by SIRT1 in low nutrients/high NAD conditions, leading to its activation. Ubiquitinated. Ubiquitination by RNF34 induces proteasomal degradation. White quadriceps and red tibialis anterior (TA) muscles, liver, kidney and brown adipose tissue (at protein level). Skeletal muscle, brown adipose tissue, heart, kidney and brain.

Its subcellular location is the nucleus. The protein localises to the PML body. In terms of biological role, transcriptional coactivator for steroid receptors and nuclear receptors. Greatly increases the transcriptional activity of PPARG and thyroid hormone receptor on the uncoupling protein promoter. Can regulate key mitochondrial genes that contribute to the program of adaptive thermogenesis. Plays an essential role in metabolic reprogramming in response to dietary availability through coordination of the expression of a wide array of genes involved in glucose and fatty acid metabolism. Acts as a key regulator of gluconeogenesis: stimulates hepatic gluconeogenesis by increasing the expression of gluconeogenic enzymes, and acting together with FOXO1 to promote the fasting gluconeogenic program. Induces the expression of PERM1 in the skeletal muscle in an ESRRA-dependent manner. Also involved in the integration of the circadian rhythms and energy metabolism. Required for oscillatory expression of clock genes, such as BMAL1 and NR1D1, through the coactivation of RORA and RORC, and metabolic genes, such as PDK4 and PEPCK. This is Peroxisome proliferator-activated receptor gamma coactivator 1-alpha (Ppargc1a) from Mus musculus (Mouse).